The chain runs to 450 residues: ATP-dependent RNA helicase FAL1 (450 aa).

The Q motif motif lies at 25–53; that stretch reads PTFEDMHLKENLLRGIYAYGYESPSAVQS. Residues 56–226 enclose the Helicase ATP-binding domain; that stretch reads IVQICKGRDT…TKFMTDPVRI (171 aa). 69-76 serves as a coordination point for ATP; sequence AQSGTGKT. Residues 174–177 carry the DEAD box motif; it reads DEAD. A Helicase C-terminal domain is found at 237–398; that stretch reads GLKQYFIAVE…EMPMNGTLFY (162 aa).

This sequence belongs to the DEAD box helicase family. DDX48/FAL1 subfamily.

Its subcellular location is the nucleus. It is found in the nucleolus. It carries out the reaction ATP + H2O = ADP + phosphate + H(+). In terms of biological role, ATP-dependent RNA helicase involved in 40S ribosomal subunit biogenesis. Required for the processing and cleavage of 35S pre-rRNA at sites A0, A1, and A2, leading to mature 18S rRNA. The polypeptide is ATP-dependent RNA helicase FAL1 (FAL1) (Ajellomyces capsulatus (strain NAm1 / WU24) (Darling's disease fungus)).